We begin with the raw amino-acid sequence, 110 residues long: Cytochrome c oxidase subunit 4B (110 aa).

Transmembrane regions (helical) follow at residues 29–49, 55–75, and 89–109; these read MIAF…VGYE, FVVP…LYYF, and FIYG…TVVW.

The protein belongs to the cytochrome c oxidase bacterial subunit 4 family.

The protein localises to the cell membrane. It carries out the reaction 4 Fe(II)-[cytochrome c] + O2 + 8 H(+)(in) = 4 Fe(III)-[cytochrome c] + 2 H2O + 4 H(+)(out). The polypeptide is Cytochrome c oxidase subunit 4B (caaD) (Bacillus sp. (strain PS3)).